A 336-amino-acid polypeptide reads, in one-letter code: uncharacterized protein (336 aa).

Positions 1 to 23 (MKTRHLVYLAFALLGLGLAGLLE) are cleaved as a signal peptide. A run of 3 helical transmembrane segments spans residues 34–54 (LLSL…LLLG), 75–95 (VVVA…LLTT), and 106–126 (VHSL…ALGY). Residues 144–255 (VLDTSVLVDG…MARIYGVKAL (112 aa)) enclose the PINc domain. Asp222 contributes to the Mg(2+) binding site. The TRAM domain occupies 267–328 (QLQVGDTLKL…IQTQVGRLFF (62 aa)).

It belongs to the PINc/VapC protein family. Mg(2+) serves as cofactor.

Its subcellular location is the membrane. In terms of biological role, part of a toxin-antitoxin (TA) system. An RNase. This is an uncharacterized protein from Thermus thermophilus (strain ATCC 27634 / DSM 579 / HB8).